Here is a 638-residue protein sequence, read N- to C-terminus: Phosphomethylpyrimidine synthase (638 aa).

Substrate is bound by residues N233, M262, Y291, H327, 347-349, 388-391, and E427; these read SRG and DGLR. Position 431 (H431) interacts with Zn(2+). Y454 serves as a coordination point for substrate. H495 contributes to the Zn(2+) binding site. Residues C575, C578, and C583 each contribute to the [4Fe-4S] cluster site.

The protein belongs to the ThiC family. Homodimer. [4Fe-4S] cluster serves as cofactor.

It carries out the reaction 5-amino-1-(5-phospho-beta-D-ribosyl)imidazole + S-adenosyl-L-methionine = 4-amino-2-methyl-5-(phosphooxymethyl)pyrimidine + CO + 5'-deoxyadenosine + formate + L-methionine + 3 H(+). Its pathway is cofactor biosynthesis; thiamine diphosphate biosynthesis. Its function is as follows. Catalyzes the synthesis of the hydroxymethylpyrimidine phosphate (HMP-P) moiety of thiamine from aminoimidazole ribotide (AIR) in a radical S-adenosyl-L-methionine (SAM)-dependent reaction. This Saccharophagus degradans (strain 2-40 / ATCC 43961 / DSM 17024) protein is Phosphomethylpyrimidine synthase.